Consider the following 402-residue polypeptide: Putative cystathionine beta-lyase (402 aa).

Lys236 is subject to N6-(pyridoxal phosphate)lysine.

Belongs to the class-II pyridoxal-phosphate-dependent aminotransferase family. MalY/PatB cystathionine beta-lyase subfamily. Pyridoxal 5'-phosphate is required as a cofactor.

It carries out the reaction L,L-cystathionine + H2O = L-homocysteine + pyruvate + NH4(+). The enzyme catalyses an S-substituted L-cysteine + H2O = a thiol + pyruvate + NH4(+). Its pathway is amino-acid biosynthesis; L-methionine biosynthesis via de novo pathway; L-homocysteine from L-cystathionine: step 1/1. The protein is Putative cystathionine beta-lyase of Mycobacterium leprae (strain TN).